The primary structure comprises 238 residues: Sugar fermentation stimulation protein homolog (238 aa).

This sequence belongs to the SfsA family.

This Brucella melitensis biotype 1 (strain ATCC 23456 / CCUG 17765 / NCTC 10094 / 16M) protein is Sugar fermentation stimulation protein homolog.